A 115-amino-acid chain; its full sequence is Migration and invasion enhancer 1 (115 aa).

Over residues 1 to 10 the composition is skewed to polar residues; sequence MSGDTGTTSV. Residues 1-22 form a disordered region; sequence MSGDTGTTSVAPPPGETEPGHG. Ser-2 carries the N-acetylserine modification. A disulfide bridge links Cys-30 with Cys-33. Cys-112 carries S-geranylgeranyl cysteine lipidation. Residues 113-115 constitute a propeptide, removed in mature form; the sequence is VIL.

This sequence belongs to the SelWTH family. As to quaternary structure, interacts with GPX1. Post-translationally, isoprenylation facilitates association with the plasma membrane and enhances the migratory phenotype of cells by inducing increased filopodia formation.

It localises to the cytoplasm. The protein localises to the cytosol. The protein resides in the cell membrane. In terms of biological role, increases cell migration by inducing filopodia formation at the leading edge of migrating cells. Plays a role in regulation of apoptosis, possibly through control of CASP3. May be involved in a redox-related process. This Bos taurus (Bovine) protein is Migration and invasion enhancer 1 (MIEN1).